The sequence spans 547 residues: Chaperonin GroEL (547 aa).

Residues 30 to 33 (TLGP), K51, 87 to 91 (DGTTT), G415, and D496 each bind ATP.

It belongs to the chaperonin (HSP60) family. In terms of assembly, forms a cylinder of 14 subunits composed of two heptameric rings stacked back-to-back. Interacts with the co-chaperonin GroES.

It is found in the cytoplasm. The catalysed reaction is ATP + H2O + a folded polypeptide = ADP + phosphate + an unfolded polypeptide.. In terms of biological role, together with its co-chaperonin GroES, plays an essential role in assisting protein folding. The GroEL-GroES system forms a nano-cage that allows encapsulation of the non-native substrate proteins and provides a physical environment optimized to promote and accelerate protein folding. The protein is Chaperonin GroEL of Actinobacillus pleuropneumoniae (Haemophilus pleuropneumoniae).